The sequence spans 347 residues: S-adenosylmethionine:tRNA ribosyltransferase-isomerase (347 aa).

This sequence belongs to the QueA family. As to quaternary structure, monomer.

Its subcellular location is the cytoplasm. The enzyme catalyses 7-aminomethyl-7-carbaguanosine(34) in tRNA + S-adenosyl-L-methionine = epoxyqueuosine(34) in tRNA + adenine + L-methionine + 2 H(+). Its pathway is tRNA modification; tRNA-queuosine biosynthesis. Functionally, transfers and isomerizes the ribose moiety from AdoMet to the 7-aminomethyl group of 7-deazaguanine (preQ1-tRNA) to give epoxyqueuosine (oQ-tRNA). The protein is S-adenosylmethionine:tRNA ribosyltransferase-isomerase of Exiguobacterium sibiricum (strain DSM 17290 / CCUG 55495 / CIP 109462 / JCM 13490 / 255-15).